A 486-amino-acid chain; its full sequence is Keratin-3, type I cytoskeletal 51 kDa (486 aa).

Positions 1–125 (MSNYSIKQSA…AGGMDIFSTN (125 aa)) are head. Positions 126–161 (EKQTMQNLNDRLASYLDKVHALETANTELERKIKEW) are coil 1A. The 317-residue stretch at 126–442 (EKQTMQNLND…RLLDGDLSKP (317 aa)) folds into the IF rod domain. The interval 162–184 (YEKQRPGSSSGDGAKDYSKYYTM) is linker 1. A coil 1B region spans residues 185–276 (INDLKNQIIA…KNHEDELKGM (92 aa)). Positions 277-299 (QVTQVGQVNVEMNAAPSSDLTKI) are linker 12. Residues 300–438 (LNDMRSQYED…ETYRRLLDGD (139 aa)) form a coil 2 region. A disordered region spans residues 435–466 (LDGDLSKPKSGGGTSTNTGSTSSKGSTRTVKR). The tract at residues 439–486 (LSKPKSGGGTSTNTGSTSSKGSTRTVKRREIIEEVVDGKVVSTKVVDM) is tail. Over residues 449 to 461 (STNTGSTSSKGST) the composition is skewed to low complexity.

This sequence belongs to the intermediate filament family. Heterotetramer of two type I and two type II keratins.

In Xenopus laevis (African clawed frog), this protein is Keratin-3, type I cytoskeletal 51 kDa.